A 528-amino-acid polypeptide reads, in one-letter code: Dihydromonacolin L monooxygenase LovA (528 aa).

Topologically, residues 1–23 (MTVDALTQPHHLLSLAWNDTQQH) are cytoplasmic. A helical; Signal-anchor for type II membrane protein membrane pass occupies residues 24–44 (GSWFAPLVTTSAGLLCLLLYL). Residues 45–528 (CSSGRRSDLP…DEDIRLPGSL (484 aa)) lie on the Lumenal side of the membrane. Residue Cys465 coordinates heme.

This sequence belongs to the cytochrome P450 family. It depends on heme as a cofactor.

Its subcellular location is the membrane. It localises to the endoplasmic reticulum membrane. The catalysed reaction is dihydromonacolin L carboxylate + reduced [NADPH--hemoprotein reductase] + O2 = monacolin L carboxylate + oxidized [NADPH--hemoprotein reductase] + 2 H2O + H(+). It carries out the reaction monacolin L carboxylate + reduced [NADPH--hemoprotein reductase] + O2 = monacolin J carboxylate + oxidized [NADPH--hemoprotein reductase] + H2O + H(+). The protein operates within polyketide biosynthesis; lovastatin biosynthesis. Dihydromonacolin L monooxygenase; part of the gene cluster that mediates the biosynthesis of lovastatin (also known as mevinolin, mevacor or monacolin K), a hypolipidemic inhibitor of (3S)-hydroxymethylglutaryl-coenzyme A (HMG-CoA) reductase (HMGR). The first step in the biosynthesis of lovastatin is the production of dihydromonacolin L acid by the lovastatin nonaketide synthase lovB and the trans-acting enoyl reductase lovC via condensation of one acetyl-CoA unit and 8 malonyl-CoA units. Dihydromonacolin L acid is released from lovB by the thioesterase lovG. Next, dihydromonacolin L acid is oxidized by the dihydromonacolin L monooxygenase lovA twice to form monacolin J acid. The 2-methylbutyrate moiety of lovastatin is synthesized by the lovastatin diketide synthase lovF via condensation of one acetyl-CoA unit and one malonyl-CoA unit. Finally, the covalent attachment of this moiety to monacolin J acid is catalyzed by the transesterase lovD to yield lovastatin. LovD has broad substrate specificity and can also convert monacolin J to simvastatin using alpha-dimethylbutanoyl-S-methyl-3-mercaptopropionate (DMB-S-MMP) as the thioester acyl donor, and can also catalyze the reverse reaction and function as hydrolase in vitro. LovD has much higher activity with LovF-bound 2-methylbutanoate than with free diketide substrates. In Aspergillus terreus, this protein is Dihydromonacolin L monooxygenase LovA.